The primary structure comprises 802 residues: Acetyl-CoA decarbonylase/synthase complex subunit alpha 1 (802 aa).

Positions 68, 71, 76, and 86 each coordinate [4Fe-4S] cluster. Histidine 109 contributes to the CO binding site. Residues histidine 243, cysteine 271, and cysteine 310 each coordinate [Ni-4Fe-4S] cluster. 2 consecutive 4Fe-4S ferredoxin-type domains span residues 395–424 and 435–464; these read DEAL…VDQG and SKLA…INVI. Residues cysteine 405, cysteine 408, cysteine 411, cysteine 415, cysteine 444, cysteine 447, cysteine 450, and cysteine 454 each contribute to the [4Fe-4S] cluster site. The [Ni-4Fe-4S] cluster site is built by cysteine 512, cysteine 541, and cysteine 576.

The protein belongs to the Ni-containing carbon monoxide dehydrogenase family. In terms of assembly, heterotetramer of two alpha and two epsilon subunits. The ACDS complex is made up of alpha, epsilon, beta, gamma and delta subunits with a probable stoichiometry of (alpha(2)epsilon(2))(4)-beta(8)-(gamma(1)delta(1))(8). The cofactor is [4Fe-4S] cluster. It depends on [Ni-4Fe-4S] cluster as a cofactor.

It catalyses the reaction CO + 2 oxidized [2Fe-2S]-[ferredoxin] + H2O = 2 reduced [2Fe-2S]-[ferredoxin] + CO2 + 2 H(+). In terms of biological role, part of the ACDS complex that catalyzes the reversible cleavage of acetyl-CoA, allowing autotrophic growth from CO(2). The alpha-epsilon subcomponent functions as a carbon monoxide dehydrogenase. The protein is Acetyl-CoA decarbonylase/synthase complex subunit alpha 1 of Archaeoglobus fulgidus (strain ATCC 49558 / DSM 4304 / JCM 9628 / NBRC 100126 / VC-16).